The sequence spans 226 residues: ATP-dependent dethiobiotin synthetase BioD (226 aa).

12–17 (GVGKTV) is an ATP binding site. T16 is a Mg(2+) binding site. K37 is a catalytic residue. A substrate-binding site is contributed by T41. ATP is bound by residues D49, 108 to 111 (EGAG), 169 to 170 (GS), and 197 to 199 (PAG). Mg(2+) is bound by residues D49 and E108.

Belongs to the dethiobiotin synthetase family. Homodimer. Mg(2+) serves as cofactor.

The protein resides in the cytoplasm. It carries out the reaction (7R,8S)-7,8-diammoniononanoate + CO2 + ATP = (4R,5S)-dethiobiotin + ADP + phosphate + 3 H(+). The protein operates within cofactor biosynthesis; biotin biosynthesis; biotin from 7,8-diaminononanoate: step 1/2. Its function is as follows. Catalyzes a mechanistically unusual reaction, the ATP-dependent insertion of CO2 between the N7 and N8 nitrogen atoms of 7,8-diaminopelargonic acid (DAPA, also called 7,8-diammoniononanoate) to form a ureido ring. The sequence is that of ATP-dependent dethiobiotin synthetase BioD from Mycobacterium leprae (strain Br4923).